The sequence spans 804 residues: SH3-containing GRB2-like protein 3-interacting protein 1 (804 aa).

Disordered stretches follow at residues 1–90 (MMEG…EESH), 124–181 (LSPS…GPPL), and 199–254 (IWGS…QSAT). Basic and acidic residues predominate over residues 16-34 (RKKEKDTDSTGSPDRDGIK). A phosphoserine mark is found at S54, S80, S81, S83, S125, S127, S132, and S145. Phosphothreonine occurs at positions 156 and 158. S212 is subject to Phosphoserine. Pro residues predominate over residues 221 to 236 (TGTPPPLPPKNVPATP). Phosphothreonine occurs at positions 223 and 235. Phosphoserine occurs at positions 241, 263, 276, 292, and 295. Positions 289-309 (VHFSDTSPEHVTPELTPREKV) are enriched in basic and acidic residues. Residues 289–500 (VHFSDTSPEH…LSAATTPTVE (212 aa)) form a disordered region. Phosphothreonine is present on residues T300 and T304. Pro residues predominate over residues 322–346 (SPAPGPLGPPGPTGPPGPPGPPRNV). S348 bears the Phosphoserine mark. Basic and acidic residues predominate over residues 354–369 (EVQKKVAEQTFIKDDY). S375 is subject to Phosphoserine. A Phosphothreonine modification is found at T386. The segment covering 413–432 (TSGASSPARPATPLLPCSST) has biased composition (low complexity). Over residues 433 to 451 (TPPPPPPRPPSRPKLPPGK) the composition is skewed to pro residues. 2 stretches are compositionally biased toward low complexity: residues 458–468 (SRPFSPPIHSS) and 475–498 (PLAR…TTPT). At S462 the chain carries Phosphoserine. The 269-residue stretch at 535 to 803 (TLPVAAAFTE…RFAAGKYLAD (269 aa)) folds into the MHD domain. Interaction with DPF motifs-containing proteins regions lie at residues 537–543 (PVAAAFT), 569–571 (SFP), 643–646 (TYYN), and 789–794 (SLIKKR). A necessary and sufficient to mediate interaction with CANX region spans residues 625 to 804 (MPNLMTHLKK…FAAGKYLADN (180 aa)).

As to quaternary structure, interacts with proteins essential or regulating the formation of functional clathrin-coated pits. Interacts with CANX. Interacts with AP2A1. Interacts with EPS15. Interacts with SH3GL3. Interacts with AMPH. Interacts with ITSN1 (via SH3 domains). Interacts with and REPS1.

Its subcellular location is the membrane. The protein resides in the clathrin-coated pit. Functionally, may function in clathrin-mediated endocytosis. Has both a membrane binding/tubulating activity and the ability to recruit proteins essential to the formation of functional clathrin-coated pits. Has a preference for membranes enriched in phosphatidylserine and phosphoinositides and is required for the endocytosis of the transferrin receptor. May also bind tubulin. May play a role in the regulation of energy homeostasis. This Pongo abelii (Sumatran orangutan) protein is SH3-containing GRB2-like protein 3-interacting protein 1 (SGIP1).